The sequence spans 321 residues: Lipoyl synthase (321 aa).

Positions 68, 73, 79, 94, 98, 101, and 308 each coordinate [4Fe-4S] cluster. The region spanning 80-297 (FNHGTATFMI…KALADELGFT (218 aa)) is the Radical SAM core domain.

This sequence belongs to the radical SAM superfamily. Lipoyl synthase family. [4Fe-4S] cluster is required as a cofactor.

It localises to the cytoplasm. The catalysed reaction is [[Fe-S] cluster scaffold protein carrying a second [4Fe-4S](2+) cluster] + N(6)-octanoyl-L-lysyl-[protein] + 2 oxidized [2Fe-2S]-[ferredoxin] + 2 S-adenosyl-L-methionine + 4 H(+) = [[Fe-S] cluster scaffold protein] + N(6)-[(R)-dihydrolipoyl]-L-lysyl-[protein] + 4 Fe(3+) + 2 hydrogen sulfide + 2 5'-deoxyadenosine + 2 L-methionine + 2 reduced [2Fe-2S]-[ferredoxin]. The protein operates within protein modification; protein lipoylation via endogenous pathway; protein N(6)-(lipoyl)lysine from octanoyl-[acyl-carrier-protein]: step 2/2. Catalyzes the radical-mediated insertion of two sulfur atoms into the C-6 and C-8 positions of the octanoyl moiety bound to the lipoyl domains of lipoate-dependent enzymes, thereby converting the octanoylated domains into lipoylated derivatives. This chain is Lipoyl synthase, found in Shewanella frigidimarina (strain NCIMB 400).